A 465-amino-acid polypeptide reads, in one-letter code: Probable zinc metalloprotease PTT_17836 (465 aa).

A signal peptide spans 1-20 (MRSASTLAVCAATLLQIACS). A glycan (N-linked (GlcNAc...) asparagine) is linked at Asn140. His163, Asp183, and Glu216 together coordinate Zn(2+). Asn231 carries an N-linked (GlcNAc...) asparagine glycan. Asp243 lines the Zn(2+) pocket. Residues Asn272, Asn330, Asn378, Asn384, Asn421, and Asn426 are each glycosylated (N-linked (GlcNAc...) asparagine). One can recognise a Fibronectin type-III domain in the interval 371 to 464 (APTNVGVNTT…LPFPFGCARN (94 aa)).

It belongs to the peptidase M28 family. M28B subfamily. It depends on Zn(2+) as a cofactor.

The protein resides in the secreted. The sequence is that of Probable zinc metalloprotease PTT_17836 from Pyrenophora teres f. teres (strain 0-1) (Barley net blotch fungus).